Here is a 246-residue protein sequence, read N- to C-terminus: Bis(5'-nucleosyl)-tetraphosphatase PrpE [asymmetrical] (246 aa).

Belongs to the PrpE family. The cofactor is Ni(2+).

It carries out the reaction P(1),P(4)-bis(5'-guanosyl) tetraphosphate + H2O = GMP + GTP + 2 H(+). Its function is as follows. Asymmetrically hydrolyzes Ap4p to yield AMP and ATP. This is Bis(5'-nucleosyl)-tetraphosphatase PrpE [asymmetrical] from Bacillus cereus (strain 03BB102).